We begin with the raw amino-acid sequence, 267 residues long: 4-hydroxy-tetrahydrodipicolinate reductase (267 aa).

Residues 8–13 and D34 each bind NAD(+); that span reads GAAGRM. R35 is an NADP(+) binding site. NAD(+) contacts are provided by residues 98 to 100 and 122 to 125; these read GTT and AANF. H155 functions as the Proton donor/acceptor in the catalytic mechanism. H156 is a (S)-2,3,4,5-tetrahydrodipicolinate binding site. K159 acts as the Proton donor in catalysis. 165-166 is a binding site for (S)-2,3,4,5-tetrahydrodipicolinate; it reads GT.

This sequence belongs to the DapB family.

It localises to the cytoplasm. The catalysed reaction is (S)-2,3,4,5-tetrahydrodipicolinate + NAD(+) + H2O = (2S,4S)-4-hydroxy-2,3,4,5-tetrahydrodipicolinate + NADH + H(+). It carries out the reaction (S)-2,3,4,5-tetrahydrodipicolinate + NADP(+) + H2O = (2S,4S)-4-hydroxy-2,3,4,5-tetrahydrodipicolinate + NADPH + H(+). It functions in the pathway amino-acid biosynthesis; L-lysine biosynthesis via DAP pathway; (S)-tetrahydrodipicolinate from L-aspartate: step 4/4. Catalyzes the conversion of 4-hydroxy-tetrahydrodipicolinate (HTPA) to tetrahydrodipicolinate. This Ectopseudomonas mendocina (strain ymp) (Pseudomonas mendocina) protein is 4-hydroxy-tetrahydrodipicolinate reductase.